The primary structure comprises 310 residues: Tagatose-6-phosphate kinase (310 aa).

Belongs to the carbohydrate kinase PfkB family. LacC subfamily.

It catalyses the reaction D-tagatofuranose 6-phosphate + ATP = D-tagatofuranose 1,6-bisphosphate + ADP + H(+). It participates in carbohydrate metabolism; D-tagatose 6-phosphate degradation; D-glyceraldehyde 3-phosphate and glycerone phosphate from D-tagatose 6-phosphate: step 1/2. This chain is Tagatose-6-phosphate kinase, found in Lactococcus lactis subsp. lactis (Streptococcus lactis).